The primary structure comprises 578 residues: XK-related protein 6 (578 aa).

7 helical membrane-spanning segments follow: residues 86-106, 114-134, 253-273, 307-327, 348-368, 377-397, and 410-430; these read WIVLALLVFFWDVGTDLWLAV, FLWSGLTLFFVLVPSVLVQIL, WLQCVSALSSLLSLAWVLASY, VLSLALFASVFHIYFGIFVVL, WEEVLFNMVVGVVYVFCWFNV, MVAYYVVVLLENVILTSLWYA, and LALCGVFLCFASGVACMVLYY.

It belongs to the XK family.

The protein localises to the cell membrane. This chain is XK-related protein 6 (xkr6), found in Tetraodon nigroviridis (Spotted green pufferfish).